The sequence spans 185 residues: MTNEIRKDAETRMDKCVEAFKNQISKIRTGRASPSILDGIQVEYYGSATPLRQVANVVVEDSRTLAITVFDRTLGPAVEKAIMASDLGLNPSSAGTVIRVPLPPLTEERRKDLIKVVRGEAEQGRVSVRNVRRDANDKLKALLKDKAISEDEERRAQDDVQKLTDNFIKKVDTALAEKEAELMEF.

The protein belongs to the RRF family.

The protein resides in the cytoplasm. In terms of biological role, responsible for the release of ribosomes from messenger RNA at the termination of protein biosynthesis. May increase the efficiency of translation by recycling ribosomes from one round of translation to another. In Pectobacterium carotovorum subsp. carotovorum (strain PC1), this protein is Ribosome-recycling factor.